The sequence spans 1369 residues: Phosphoribosylformylglycinamidine synthase (1369 aa).

2 disordered regions span residues 321-352 (HPTA…AKPK) and 373-400 (ENAR…KPDR). An ATP-binding site is contributed by 330 to 341 (GASTGAGGEIRD). Residue Ala-721 coordinates ATP. 4 residues coordinate Mg(2+): Asp-722, Glu-761, Asn-765, and Asp-934. Ser-936 is a binding site for ATP. One can recognise a Glutamine amidotransferase type-1 domain in the interval 1116-1369 (MAILREQGVN…MFRNARKQMG (254 aa)). The Nucleophile role is filled by Cys-1209. Active-site residues include His-1330 and Glu-1332.

It in the N-terminal section; belongs to the FGAMS family. Monomer.

It localises to the cytoplasm. It catalyses the reaction N(2)-formyl-N(1)-(5-phospho-beta-D-ribosyl)glycinamide + L-glutamine + ATP + H2O = 2-formamido-N(1)-(5-O-phospho-beta-D-ribosyl)acetamidine + L-glutamate + ADP + phosphate + H(+). The protein operates within purine metabolism; IMP biosynthesis via de novo pathway; 5-amino-1-(5-phospho-D-ribosyl)imidazole from N(2)-formyl-N(1)-(5-phospho-D-ribosyl)glycinamide: step 1/2. Functionally, phosphoribosylformylglycinamidine synthase involved in the purines biosynthetic pathway. Catalyzes the ATP-dependent conversion of formylglycinamide ribonucleotide (FGAR) and glutamine to yield formylglycinamidine ribonucleotide (FGAM) and glutamate. This chain is Phosphoribosylformylglycinamidine synthase, found in Ralstonia nicotianae (strain ATCC BAA-1114 / GMI1000) (Ralstonia solanacearum).